Consider the following 414-residue polypeptide: uncharacterized protein (414 aa).

Disordered regions lie at residues 136–168 (SSKS…TVPT), 298–322 (KNFP…SYHR), and 350–382 (PPHS…MSTS).

This is an uncharacterized protein from Macaca fascicularis (Crab-eating macaque).